A 1151-amino-acid chain; its full sequence is Syntaxin-binding protein 5 (1151 aa).

The disordered stretch occupies residues 14–34; sequence TAGSSSASQQQQQQHPPGNRE. Over residues 17 to 27 the composition is skewed to low complexity; that stretch reads SSSASQQQQQQ. WD repeat units lie at residues 61–94, 101–140, 145–181, 200–234, 240–272, 294–336, 344–378, 400–477, 505–619, and 633–695; these read SALAFDPVQKILAVGTQTGALRLFGRPGVECYCQ, VIQLQFLINEGALVSALADDTLHLWNLRQKRPAILHSLKF, VTFCHLPFQSKWLYVGTERGNIHIVNVESFTLSGYVI, HISDNPMDEGKLLIGFESGTVVLWDLKSKKADYRY, IHSVAWHHEGKQFICSHSDGTLTIWNVRSPAKP, PILK…KSTA, IVDFLTLCETPYPNDFQEPYAVVVLLEKDLVLIDL, TCCE…YKLK, QIIS…ELVI, and TSLA…SGAG. Disordered stretches follow at residues 555-595 and 674-729; these read ETPE…GLRD and SNDP…EQKM. Ser-692 carries the post-translational modification Phosphoserine. The span at 712–721 shows a compositional bias: low complexity; that stretch reads SPTSGSSSPH. Ser-723 carries the phosphoserine; by PKA modification. At Ser-759 the chain carries Phosphoserine. The residue at position 762 (Thr-762) is a Phosphothreonine. Residue Ser-782 is modified to Phosphoserine. Thr-784 is subject to Phosphothreonine. Position 785 is a phosphoserine (Ser-785). 4 WD repeats span residues 794–851, 860–934, 939–983, and 997–1020; these read ISAL…SGTI, RMAF…QNCA, ITET…LDVY, and CFTNNGQALYLVSPTEIQRLTYSQ. Residues 881–892 are compositionally biased toward basic and acidic residues; the sequence is HNVPEEKDEKEK. Residues 881–906 are disordered; it reads HNVPEEKDEKEKLKKRRPVSVSPSSS. Phosphoserine occurs at positions 900 and 902. Position 1039 is a phosphothreonine (Thr-1039). Residues Ser-1058 and Ser-1131 each carry the phosphoserine modification. The 61-residue stretch at 1086-1146 folds into the v-SNARE coiled-coil homology domain; it reads GIEGVKGAAS…HEIMLKYKDK (61 aa).

The protein belongs to the WD repeat L(2)GL family. In terms of assembly, interacts with STX1A and STX1B via its v-SNARE homology domain. Part of a complex that contains STX1, STXBP5, SNAP25 and SYT1. Part of a complex that contains STXBP5, STX4A and SNAP23.

The protein localises to the cytoplasm. Its subcellular location is the cell membrane. The protein resides in the cytoplasmic vesicle membrane. It localises to the cytoplasmic vesicle. It is found in the secretory vesicle. The protein localises to the synaptic vesicle. Its subcellular location is the synapse. Its function is as follows. Plays a regulatory role in calcium-dependent exocytosis and neurotransmitter release. Inhibits membrane fusion between transport vesicles and the plasma membrane. May modulate the assembly of trans-SNARE complexes between transport vesicles and the plasma membrane. Inhibits translocation of GLUT4 from intracellular vesicles to the plasma membrane. Competes with STXBP1 for STX1 binding. The chain is Syntaxin-binding protein 5 (STXBP5) from Homo sapiens (Human).